The primary structure comprises 404 residues: Multidrug resistance protein MdtG (404 aa).

The next 11 helical transmembrane spans lie at 19–39 (LGCF…PLYV), 56–76 (LVFS…GGLA), 90–110 (LGMA…QFLI), 113–133 (ALLG…ATQV), 144–164 (TLST…GLLA), 171–191 (PVFF…FFFI), 222–242 (LFVT…ILTL), 254–274 (IAFI…LSAP), 288–308 (ILIV…FVQT), 317–337 (FLLG…LVYN), and 376–396 (AVFC…WNSL).

It belongs to the major facilitator superfamily. DHA1 family. MdtG (TC 2.A.1.2.20) subfamily.

It localises to the cell inner membrane. The sequence is that of Multidrug resistance protein MdtG from Salmonella dublin (strain CT_02021853).